The sequence spans 211 residues: Dephospho-CoA kinase (211 aa).

Positions 3–206 (VIGLTGGIAT…GGRGRRLPNA (204 aa)) constitute a DPCK domain. 11–16 (ATGKST) contributes to the ATP binding site.

It belongs to the CoaE family.

It is found in the cytoplasm. It carries out the reaction 3'-dephospho-CoA + ATP = ADP + CoA + H(+). It functions in the pathway cofactor biosynthesis; coenzyme A biosynthesis; CoA from (R)-pantothenate: step 5/5. Catalyzes the phosphorylation of the 3'-hydroxyl group of dephosphocoenzyme A to form coenzyme A. In Anaeromyxobacter dehalogenans (strain 2CP-C), this protein is Dephospho-CoA kinase.